Here is a 392-residue protein sequence, read N- to C-terminus: Chaperone protein DnaJ (392 aa).

One can recognise a J domain in the interval 2–67 (DYYSILGISK…QKRDSYDRFG (66 aa)). The CR-type zinc finger occupies 148-226 (GVEKELVVSG…CRGQGRVKDK (79 aa)). Zn(2+) contacts are provided by Cys-161, Cys-164, Cys-178, Cys-181, Cys-200, Cys-203, Cys-214, and Cys-217. CXXCXGXG motif repeat units lie at residues 161–168 (CETCSGQG), 178–185 (CERCKGSG), 200–207 (CPECGGEG), and 214–221 (CSSCRGQG).

Belongs to the DnaJ family. In terms of assembly, homodimer. Requires Zn(2+) as cofactor.

It localises to the cytoplasm. Functionally, participates actively in the response to hyperosmotic and heat shock by preventing the aggregation of stress-denatured proteins and by disaggregating proteins, also in an autonomous, DnaK-independent fashion. Unfolded proteins bind initially to DnaJ; upon interaction with the DnaJ-bound protein, DnaK hydrolyzes its bound ATP, resulting in the formation of a stable complex. GrpE releases ADP from DnaK; ATP binding to DnaK triggers the release of the substrate protein, thus completing the reaction cycle. Several rounds of ATP-dependent interactions between DnaJ, DnaK and GrpE are required for fully efficient folding. Also involved, together with DnaK and GrpE, in the DNA replication of plasmids through activation of initiation proteins. The polypeptide is Chaperone protein DnaJ (Chlamydia pneumoniae (Chlamydophila pneumoniae)).